The following is a 420-amino-acid chain: Cytochrome P-450 monooxygenase DoxA (420 aa).

Cysteine 367 is a heme binding site.

Belongs to the cytochrome P450 family. Monomer. Requires heme as cofactor.

It is found in the cytoplasm. It catalyses the reaction 13-deoxydaunorubicin + NADPH + O2 + H(+) = 13-dihydrodaunorubicin + NADP(+) + H2O. The enzyme catalyses 13-dihydrodaunorubicin + NADPH + O2 + H(+) = daunorubicin + NADP(+) + 2 H2O. The catalysed reaction is 13-deoxycarminomycin + NADPH + O2 + H(+) = 13-dihydrocarminomycin + NADP(+) + H2O. It carries out the reaction 13-dihydrocarminomycin + NADPH + O2 + H(+) = carminomycin + NADP(+) + 2 H2O. It catalyses the reaction daunorubicin + NADPH + O2 + H(+) = doxorubicin + NADP(+) + H2O. It participates in antibiotic biosynthesis; daunorubicin biosynthesis. It functions in the pathway antibiotic biosynthesis; carminomycin biosynthesis. The protein operates within antibiotic biosynthesis; doxorubicin biosynthesis. Functionally, involved in the biosynthesis of the anthracyclines carminomycin, daunorubicin (daunomycin) and doxorubicin (adriamycin) which are aromatic polyketide antibiotics that exhibit high cytotoxicity and are widely applied in the chemotherapy of a variety of cancers. In vivo, DoxA catalyzes the C-13 hydroxylation of 13-deoxycarminomycin and 13-deoxydaunorubicin to yield 13-dihydrocarminomycin and 13-dihydrodaunorubicin, respectively, as well as the oxidation of these 13-dihydro-anthracyclines to their respective 13-keto forms, carminomycin and daunorubicin. In vivo, it also catalyzes the C-14 hydroxylation of daunorubicin to form doxorubicin. It can only use NADP. DoxA acts jointly with DnrV. This Streptomyces peucetius subsp. caesius protein is Cytochrome P-450 monooxygenase DoxA (doxA).